The sequence spans 510 residues: Light-independent protochlorophyllide reductase subunit B (510 aa).

Residue Asp-36 participates in [4Fe-4S] cluster binding. Asp-296 serves as the catalytic Proton donor. Residue 431 to 432 (GM) coordinates substrate.

Belongs to the ChlB/BchB/BchZ family. As to quaternary structure, protochlorophyllide reductase is composed of three subunits; ChlL, ChlN and ChlB. Forms a heterotetramer of two ChlB and two ChlN subunits. The cofactor is [4Fe-4S] cluster.

It localises to the plastid. The protein localises to the chloroplast. The catalysed reaction is chlorophyllide a + oxidized 2[4Fe-4S]-[ferredoxin] + 2 ADP + 2 phosphate = protochlorophyllide a + reduced 2[4Fe-4S]-[ferredoxin] + 2 ATP + 2 H2O. It functions in the pathway porphyrin-containing compound metabolism; chlorophyll biosynthesis (light-independent). Its function is as follows. Component of the dark-operative protochlorophyllide reductase (DPOR) that uses Mg-ATP and reduced ferredoxin to reduce ring D of protochlorophyllide (Pchlide) to form chlorophyllide a (Chlide). This reaction is light-independent. The NB-protein (ChlN-ChlB) is the catalytic component of the complex. This chain is Light-independent protochlorophyllide reductase subunit B, found in Angiopteris evecta (Mule's foot fern).